The sequence spans 145 residues: Large ribosomal subunit protein uL13 (145 aa).

The interval 72-91 (DKMYHRHSNHPGGLKSISAG) is disordered.

The protein belongs to the universal ribosomal protein uL13 family. As to quaternary structure, part of the 50S ribosomal subunit.

Functionally, this protein is one of the early assembly proteins of the 50S ribosomal subunit, although it is not seen to bind rRNA by itself. It is important during the early stages of 50S assembly. The protein is Large ribosomal subunit protein uL13 of Staphylococcus epidermidis (strain ATCC 12228 / FDA PCI 1200).